The following is a 365-amino-acid chain: Alanine racemase (365 aa).

Residue lysine 32 is the Proton acceptor; specific for D-alanine of the active site. An N6-(pyridoxal phosphate)lysine modification is found at lysine 32. Arginine 128 serves as a coordination point for substrate. Tyrosine 257 acts as the Proton acceptor; specific for L-alanine in catalysis. Residue methionine 305 participates in substrate binding.

The protein belongs to the alanine racemase family. Pyridoxal 5'-phosphate is required as a cofactor.

The catalysed reaction is L-alanine = D-alanine. Its pathway is amino-acid biosynthesis; D-alanine biosynthesis; D-alanine from L-alanine: step 1/1. Functionally, catalyzes the interconversion of L-alanine and D-alanine. May also act on other amino acids. The protein is Alanine racemase (alr) of Francisella tularensis subsp. tularensis (strain SCHU S4 / Schu 4).